The following is a 176-amino-acid chain: Jacalin-related lectin 19 (176 aa).

The Jacalin-type lectin domain occupies 12–154 (TVFVGPWGGN…LDSIGFHLSR (143 aa)).

It belongs to the jacalin lectin family.

This chain is Jacalin-related lectin 19 (JAL19), found in Arabidopsis thaliana (Mouse-ear cress).